A 122-amino-acid chain; its full sequence is Biogenesis of lysosome-related organelles complex 1 subunit CNL1 (122 aa).

Residues M1–E10 are compositionally biased toward basic and acidic residues. The interval M1–I21 is disordered. Residues E63 to I95 adopt a coiled-coil conformation.

The protein belongs to the BLOC1S4 family. Component of the biogenesis of lysosome-related organelles complex-1 (BLOC-1) composed of at least BLI1, BLS1, CNL1, KXD1, SNN1 and VAB2.

It is found in the cytoplasm. Functionally, component of the biogenesis of lysosome-related organelles complex-1 (BLOC-1), a complex that is involved in endosomal cargo sorting. This chain is Biogenesis of lysosome-related organelles complex 1 subunit CNL1 (CNL1), found in Saccharomyces cerevisiae (strain ATCC 204508 / S288c) (Baker's yeast).